The chain runs to 650 residues: Chaperone protein DnaK (650 aa).

A Phosphothreonine; by autocatalysis modification is found at Thr200. Residues 614 to 635 are disordered; the sequence is AGAAGAAGAAEGAAHAGGAQQA.

It belongs to the heat shock protein 70 family.

Functionally, acts as a chaperone. This Burkholderia lata (strain ATCC 17760 / DSM 23089 / LMG 22485 / NCIMB 9086 / R18194 / 383) protein is Chaperone protein DnaK.